Consider the following 155-residue polypeptide: Small ribosomal subunit protein uS7c (155 aa).

The protein belongs to the universal ribosomal protein uS7 family. In terms of assembly, part of the 30S ribosomal subunit.

The protein resides in the plastid. Its subcellular location is the chloroplast. In terms of biological role, one of the primary rRNA binding proteins, it binds directly to 16S rRNA where it nucleates assembly of the head domain of the 30S subunit. This Spirogyra maxima (Green alga) protein is Small ribosomal subunit protein uS7c (rps7).